The following is a 314-amino-acid chain: DNA-directed RNA polymerase subunit alpha (314 aa).

An alpha N-terminal domain (alpha-NTD) region spans residues 1–228; that stretch reads MIEIEKPKIE…EHLNIFVGLT (228 aa). Positions 245 to 314 are alpha C-terminal domain (alpha-CTD); the sequence is KEKVMEMTIE…DLGLGLRDDD (70 aa).

This sequence belongs to the RNA polymerase alpha chain family. Homodimer. The RNAP catalytic core consists of 2 alpha, 1 beta, 1 beta' and 1 omega subunit. When a sigma factor is associated with the core the holoenzyme is formed, which can initiate transcription.

The catalysed reaction is RNA(n) + a ribonucleoside 5'-triphosphate = RNA(n+1) + diphosphate. Functionally, DNA-dependent RNA polymerase catalyzes the transcription of DNA into RNA using the four ribonucleoside triphosphates as substrates. This Oceanobacillus iheyensis (strain DSM 14371 / CIP 107618 / JCM 11309 / KCTC 3954 / HTE831) protein is DNA-directed RNA polymerase subunit alpha.